We begin with the raw amino-acid sequence, 328 residues long: Malate dehydrogenase (328 aa).

Gly-16–Ser-22 is a binding site for NAD(+). Substrate is bound by residues Arg-97 and Arg-103. Residues Asn-110, Gln-117, and Val-134–Asn-136 each bind NAD(+). Residues Asn-136 and Arg-167 each coordinate substrate. Residue His-192 is the Proton acceptor of the active site.

The protein belongs to the LDH/MDH superfamily. MDH type 2 family. As to quaternary structure, homotetramer.

The catalysed reaction is (S)-malate + NAD(+) = oxaloacetate + NADH + H(+). Citrate activates the enzyme in the oxidation of malate to oxaloacetate and inhibits it in the reverse reaction. Its function is as follows. Catalyzes the reversible oxidation of malate to oxaloacetate. Exhibits higher catalytic efficiency for oxaloacetate reduction than for malate oxidation in vitro. Almost equally active both for NADH and NADPH on the bases of the kcat values at pH 6.5, but catalytic efficiency for oxaloacetate reduction is 50-fold higher with NADH. The chain is Malate dehydrogenase from Corynebacterium glutamicum (strain ATCC 13032 / DSM 20300 / JCM 1318 / BCRC 11384 / CCUG 27702 / LMG 3730 / NBRC 12168 / NCIMB 10025 / NRRL B-2784 / 534).